The primary structure comprises 360 residues: Phospho-N-acetylmuramoyl-pentapeptide-transferase (360 aa).

A run of 10 helical transmembrane segments spans residues 25 to 45 (RGILGVLTALALSLWLGPWMI), 73 to 93 (TMGGALILTAIAVSTLLWADL), 97 to 117 (YVWVVLAVTLLFGAIGWVDDY), 132 to 152 (WKYFWQSVFGLAAAIFLYMTA), 168 to 188 (VSIPLGIGFVVLTYFVIVGSS), 199 to 219 (GLAILPTVMVAGALAVFCYLS), 236 to 256 (AGELIVFCAALVGAGLGFLWF), 263 to 283 (VFMGDVGALALGAALGTIAVI), 288 to 308 (VVLFIMGGVFVMETLSVIIQV), and 338 to 358 (VIVRFWIITVILVLIGLATLK).

This sequence belongs to the glycosyltransferase 4 family. MraY subfamily. Requires Mg(2+) as cofactor.

The protein localises to the cell inner membrane. It carries out the reaction UDP-N-acetyl-alpha-D-muramoyl-L-alanyl-gamma-D-glutamyl-meso-2,6-diaminopimeloyl-D-alanyl-D-alanine + di-trans,octa-cis-undecaprenyl phosphate = di-trans,octa-cis-undecaprenyl diphospho-N-acetyl-alpha-D-muramoyl-L-alanyl-D-glutamyl-meso-2,6-diaminopimeloyl-D-alanyl-D-alanine + UMP. The protein operates within cell wall biogenesis; peptidoglycan biosynthesis. In terms of biological role, catalyzes the initial step of the lipid cycle reactions in the biosynthesis of the cell wall peptidoglycan: transfers peptidoglycan precursor phospho-MurNAc-pentapeptide from UDP-MurNAc-pentapeptide onto the lipid carrier undecaprenyl phosphate, yielding undecaprenyl-pyrophosphoryl-MurNAc-pentapeptide, known as lipid I. This is Phospho-N-acetylmuramoyl-pentapeptide-transferase from Ectopseudomonas mendocina (strain ymp) (Pseudomonas mendocina).